A 174-amino-acid chain; its full sequence is Peptide deformylase (174 aa).

Residues Cys-96 and His-138 each contribute to the Fe cation site. Residue Glu-139 is part of the active site. Fe cation is bound at residue His-142.

Belongs to the polypeptide deformylase family. Requires Fe(2+) as cofactor.

The catalysed reaction is N-terminal N-formyl-L-methionyl-[peptide] + H2O = N-terminal L-methionyl-[peptide] + formate. Removes the formyl group from the N-terminal Met of newly synthesized proteins. Requires at least a dipeptide for an efficient rate of reaction. N-terminal L-methionine is a prerequisite for activity but the enzyme has broad specificity at other positions. The chain is Peptide deformylase from Nautilia profundicola (strain ATCC BAA-1463 / DSM 18972 / AmH).